The following is a 330-amino-acid chain: Aspartate--ammonia ligase (330 aa).

It belongs to the class-II aminoacyl-tRNA synthetase family. AsnA subfamily.

The protein localises to the cytoplasm. The catalysed reaction is L-aspartate + NH4(+) + ATP = L-asparagine + AMP + diphosphate + H(+). It functions in the pathway amino-acid biosynthesis; L-asparagine biosynthesis; L-asparagine from L-aspartate (ammonia route): step 1/1. The chain is Aspartate--ammonia ligase from Treponema pallidum (strain Nichols).